We begin with the raw amino-acid sequence, 96 residues long: Keratin-associated protein 12-3 (96 aa).

14 tandem repeats follow at residues 10 to 14, 15 to 19, 24 to 28, 30 to 34, 35 to 39, 45 to 49, 50 to 54, 55 to 59, 60 to 64, 70 to 74, 75 to 79, 80 to 84, 85 to 89, and 90 to 94. The interval 10–94 is 14 X 5 AA approximate repeats; the sequence is CQPTCCIHSP…CRPISCSTPS (85 aa).

Belongs to the KRTAP type 12 family. Interacts with hair keratins. Restricted to a narrow region of the hair fiber cuticle, lying approximately 20 cell layers above the apex of the dermal papilla of the hair root; not detected in any other tissues.

In the hair cortex, hair keratin intermediate filaments are embedded in an interfilamentous matrix, consisting of hair keratin-associated proteins (KRTAP), which are essential for the formation of a rigid and resistant hair shaft through their extensive disulfide bond cross-linking with abundant cysteine residues of hair keratins. The matrix proteins include the high-sulfur and high-glycine-tyrosine keratins. The protein is Keratin-associated protein 12-3 (KRTAP12-3) of Homo sapiens (Human).